Here is a 344-residue protein sequence, read N- to C-terminus: Ferrochelatase (344 aa).

Positions 211 and 292 each coordinate Fe cation.

The protein belongs to the ferrochelatase family.

The protein localises to the cytoplasm. It carries out the reaction heme b + 2 H(+) = protoporphyrin IX + Fe(2+). The protein operates within porphyrin-containing compound metabolism; protoheme biosynthesis; protoheme from protoporphyrin-IX: step 1/1. Its function is as follows. Catalyzes the ferrous insertion into protoporphyrin IX. In Methylobacillus flagellatus (strain ATCC 51484 / DSM 6875 / VKM B-1610 / KT), this protein is Ferrochelatase.